Reading from the N-terminus, the 381-residue chain is MSRLQFQLQTTDGHARRGRLTFPRGTVETPAFMPVGTYGSVKGILPEQIRALGAEIILGNTFHLYLRPGLDVIGDHGGLHGFARWDGPILTDSGGFQVFSLAHRRKITEQGVTFSSPNDGARVFLGPEESMQIQKVLDSDIVMIFDECTPYPATEDVARRSMELSLRWAQRSRQAHDGLGNDAALFGIVQGGVHPDLRSRSLDGLQAIGFDGYAIGGLAVGEPEHERNAMLEHLHPRLPAERPRYLMGVGRPEDLVEGVARGVDMFDCVMPTRNARNGHYFTSFGTVRIRNAKYERDLDTIEPGCGCHACSSGYTRAYLRHLDRCNEMLAPMLGTLHNLWYYEKLMADMRAAIAAGTFVEFRRSFYAARGATTPPLPGESS.

Aspartate 92 acts as the Proton acceptor in catalysis. Residues 92 to 96, aspartate 146, glutamine 190, and glycine 217 contribute to the substrate site; that span reads DSGGF. The segment at 248 to 254 is RNA binding; the sequence is GVGRPED. Aspartate 267 (nucleophile) is an active-site residue. Residues 272–276 form an RNA binding; important for wobble base 34 recognition region; it reads TRNAR. Positions 305, 307, 310, and 337 each coordinate Zn(2+).

This sequence belongs to the queuine tRNA-ribosyltransferase family. As to quaternary structure, homodimer. Within each dimer, one monomer is responsible for RNA recognition and catalysis, while the other monomer binds to the replacement base PreQ1. It depends on Zn(2+) as a cofactor.

The enzyme catalyses 7-aminomethyl-7-carbaguanine + guanosine(34) in tRNA = 7-aminomethyl-7-carbaguanosine(34) in tRNA + guanine. It functions in the pathway tRNA modification; tRNA-queuosine biosynthesis. Catalyzes the base-exchange of a guanine (G) residue with the queuine precursor 7-aminomethyl-7-deazaguanine (PreQ1) at position 34 (anticodon wobble position) in tRNAs with GU(N) anticodons (tRNA-Asp, -Asn, -His and -Tyr). Catalysis occurs through a double-displacement mechanism. The nucleophile active site attacks the C1' of nucleotide 34 to detach the guanine base from the RNA, forming a covalent enzyme-RNA intermediate. The proton acceptor active site deprotonates the incoming PreQ1, allowing a nucleophilic attack on the C1' of the ribose to form the product. After dissociation, two additional enzymatic reactions on the tRNA convert PreQ1 to queuine (Q), resulting in the hypermodified nucleoside queuosine (7-(((4,5-cis-dihydroxy-2-cyclopenten-1-yl)amino)methyl)-7-deazaguanosine). The protein is Queuine tRNA-ribosyltransferase of Xanthomonas campestris pv. campestris (strain 8004).